The primary structure comprises 95 residues: MANEKPTEEVKTENNNHINLKVAGQDGSVVQFKIKRQTPLSKLMKAYCEPRGLSVKQIRFRFGGQPISGTDKPAQLEMEDEDTIDVFQQPTGGVY.

Positions 17–95 (HINLKVAGQD…VFQQPTGGVY (79 aa)) constitute a Ubiquitin-like domain. Glycine 93 is covalently cross-linked (Glycyl lysine isopeptide (Gly-Lys) (interchain with K-? in acceptor proteins)). A propeptide spanning residues 94–95 (VY) is cleaved from the precursor.

The protein belongs to the ubiquitin family. SUMO subfamily. Interacts with SAE2. Covalently attached to a number of proteins. In terms of processing, in contrast to SUMO1, SUMO2 and SUMO3, seems to be insensitive to sentrin-specific proteases due to the presence of Pro-90. This may impair processing to mature form and conjugation to substrates. Expressed mainly in adult and embryonic kidney. Expressed at various levels in immune tissues, with the highest expression in the lymph node and spleen.

Its function is as follows. Ubiquitin-like protein which can be covalently attached to target lysines as a monomer. Does not seem to be involved in protein degradation and may modulate protein subcellular localization, stability or activity. Upon oxidative stress, conjugates to various anti-oxidant enzymes, chaperones, and stress defense proteins. May also conjugate to NFKBIA, TFAP2A and FOS, negatively regulating their transcriptional activity, and to NR3C1, positively regulating its transcriptional activity. Covalent attachment to its substrates requires prior activation by the E1 complex SAE1-SAE2 and linkage to the E2 enzyme UBE2I. The chain is Small ubiquitin-related modifier 4 (SUMO4) from Homo sapiens (Human).